We begin with the raw amino-acid sequence, 282 residues long: MPHAPAKRQKREEYKNALHEDESNAALPKKKFYRQRAHANPFSDHSLTYPKSPADMDWASLYPAYAVVKREQKSAGEEESTPLDEEEQRRLKAITKNVEIADIGCGFGGLLFALAPKFPDTLMLEYVQEKVRALRLQNASIQLYQNASCLRANTMKFLPNFFSKAQLSKIFLCFPDPHFKQRKHKARIVSYTLNSEYAYVLRPGGVVYTITDVKDLHEWMVGHFEKHPSFERCEKEFEEEGEAMDEGVGIMRTETEEGKKVSRNGGMKYVACFRRVEDPEWP.

Positions Met1–Lys29 are disordered. The segment covering Lys10–Glu22 has biased composition (basic and acidic residues). Residues Gly104, Asn153 to Thr154, and Cys173 each bind S-adenosyl-L-methionine. Asp176 is a catalytic residue. Position 255–257 (Thr255–Glu257) interacts with S-adenosyl-L-methionine.

This sequence belongs to the class I-like SAM-binding methyltransferase superfamily. TrmB family. As to quaternary structure, forms a complex with TRM82.

The protein resides in the nucleus. It catalyses the reaction guanosine(46) in tRNA + S-adenosyl-L-methionine = N(7)-methylguanosine(46) in tRNA + S-adenosyl-L-homocysteine. The protein operates within tRNA modification; N(7)-methylguanine-tRNA biosynthesis. Catalyzes the formation of N(7)-methylguanine at position 46 (m7G46) in tRNA. The sequence is that of tRNA (guanine-N(7)-)-methyltransferase from Phaeosphaeria nodorum (strain SN15 / ATCC MYA-4574 / FGSC 10173) (Glume blotch fungus).